We begin with the raw amino-acid sequence, 481 residues long: Trigger factor (481 aa).

The 88-residue stretch at 174-261 folds into the PPIase FKBP-type domain; the sequence is GDIAVVSFKG…LKDLKEKELP (88 aa). The interval 435–481 is disordered; sequence VKEKTTKASQASKTTKAKKTTTKTTKATKTATKTTKATKTQNKKEKK. Positions 456–474 are enriched in low complexity; sequence TKTTKATKTATKTTKATKT.

It belongs to the FKBP-type PPIase family. Tig subfamily.

The protein localises to the cytoplasm. The catalysed reaction is [protein]-peptidylproline (omega=180) = [protein]-peptidylproline (omega=0). Its function is as follows. Involved in protein export. Acts as a chaperone by maintaining the newly synthesized protein in an open conformation. Functions as a peptidyl-prolyl cis-trans isomerase. This Prochlorococcus marinus (strain MIT 9312) protein is Trigger factor.